Here is a 141-residue protein sequence, read N- to C-terminus: Ubiquitin-like protein ATG12 (141 aa).

The interval Leu24–Lys54 is disordered. Gly141 participates in a covalent cross-link: Glycyl lysine isopeptide (Gly-Lys) (interchain with K-? in acceptor protein).

The protein belongs to the ATG12 family. As to quaternary structure, forms a conjugate with ATG5. Part of the minor complex composed of 4 sets of ATG12-ATG5 and ATG16L1 (400 kDa); this complex interacts with ATG3 leading to disruption of ATG7 interaction and promotion of ATG8-like proteins lipidation. Forms an 800-kDa complex composed of ATG12-ATG5 and ATG16L2. Interacts with DHX58/RIG-1, IFIH1/MDA5 and MAVS/IPS-1 in monomeric form as well as in ATG12-ATG5 conjugate. The interaction with MAVS is further enhanced upon vesicular stomatitis virus (VSV) infection. Interacts with ATG3; this interaction is essential for phosphatidylethanolamine (PE)-conjugated ATG8-like proteins formation. Interacts with ATG7. Interacts with ATG10. The ATG12-ATG5 conjugate interacts with RAB33A; this interaction is bridged by ATG16L1 and promotes ATG12-ATG5-ATG16L1 complex recruitment to phagophores. Interacts with TECPR1. Interacts with SH3BGRL. The ATG12-ATG5 conjugate interacts with PDCD6IP (via the BRO1 domain); this interaction is bridged by ATG12 and promotes multiple PDCD6IP-mediated functions such as endolysosomal trafficking, macroautophagy and exosome biogenesis. Post-translationally, acetylated by EP300.

It localises to the cytoplasm. It is found in the preautophagosomal structure membrane. Its function is as follows. Ubiquitin-like protein involved in autophagy vesicles formation. Conjugation with ATG5 through a ubiquitin-like conjugating system involving also ATG7 as an E1-like activating enzyme and ATG10 as an E2-like conjugating enzyme, is essential for its function. The ATG12-ATG5 conjugate acts as an E3-like enzyme which is required for lipidation of ATG8 family proteins and their association to the vesicle membranes. The ATG12-ATG5 conjugate also negatively regulates the innate antiviral immune response by blocking the type I IFN production pathway through direct association with RARRES3 and MAVS. Also plays a role in translation or delivery of incoming viral RNA to the translation apparatus. As part of the ATG8 conjugation system with ATG5 and ATG16L1, required for recruitment of LRRK2 to stressed lysosomes and induction of LRRK2 kinase activity in response to lysosomal stress. The sequence is that of Ubiquitin-like protein ATG12 from Rattus norvegicus (Rat).